We begin with the raw amino-acid sequence, 155 residues long: MSRKSIAEKQVAKPDPIYRNRLVNMLVNRILKNGKKSLAYRILYKAMKNIKQKTKKNPLFVLRQAVRKVTPNVTVKARRIDGSTYQVPLEIKSTQGKALAIRWLLGASRKRSGQNMAFKLSYELIDAARDNGIAIRKKEETHKMAEANRAFAHFR.

Belongs to the universal ribosomal protein uS7 family. Part of the 30S ribosomal subunit.

The protein resides in the plastid. It is found in the chloroplast. In terms of biological role, one of the primary rRNA binding proteins, it binds directly to 16S rRNA where it nucleates assembly of the head domain of the 30S subunit. The protein is Small ribosomal subunit protein uS7c (rps7) of Marchantia polymorpha (Common liverwort).